Here is a 156-residue protein sequence, read N- to C-terminus: Small ribosomal subunit protein uS7 (156 aa).

This sequence belongs to the universal ribosomal protein uS7 family. In terms of assembly, part of the 30S ribosomal subunit. Contacts proteins S9 and S11.

Functionally, one of the primary rRNA binding proteins, it binds directly to 16S rRNA where it nucleates assembly of the head domain of the 30S subunit. Is located at the subunit interface close to the decoding center, probably blocks exit of the E-site tRNA. This chain is Small ribosomal subunit protein uS7, found in Citrobacter koseri (strain ATCC BAA-895 / CDC 4225-83 / SGSC4696).